Here is a 193-residue protein sequence, read N- to C-terminus: Acyl carrier protein phosphodiesterase (193 aa).

Belongs to the AcpH family.

It catalyses the reaction holo-[ACP] + H2O = apo-[ACP] + (R)-4'-phosphopantetheine + H(+). Its function is as follows. Converts holo-ACP to apo-ACP by hydrolytic cleavage of the phosphopantetheine prosthetic group from ACP. In Pectobacterium atrosepticum (strain SCRI 1043 / ATCC BAA-672) (Erwinia carotovora subsp. atroseptica), this protein is Acyl carrier protein phosphodiesterase.